The primary structure comprises 184 residues: HVA22-like protein c (184 aa).

3 helical membrane passes run Val-13–Tyr-33, Leu-51–Leu-71, and Trp-73–Phe-93.

Belongs to the DP1 family. As to expression, predominantly expressed in flower buds and stem.

It localises to the membrane. The sequence is that of HVA22-like protein c (HVA22C) from Arabidopsis thaliana (Mouse-ear cress).